Here is a 448-residue protein sequence, read N- to C-terminus: Phosphoglucosamine mutase (448 aa).

Catalysis depends on serine 102, which acts as the Phosphoserine intermediate. Positions 102, 243, 245, and 247 each coordinate Mg(2+). Residue serine 102 is modified to Phosphoserine.

The protein belongs to the phosphohexose mutase family. The cofactor is Mg(2+). In terms of processing, activated by phosphorylation.

It catalyses the reaction alpha-D-glucosamine 1-phosphate = D-glucosamine 6-phosphate. Catalyzes the conversion of glucosamine-6-phosphate to glucosamine-1-phosphate. The chain is Phosphoglucosamine mutase from Parvibaculum lavamentivorans (strain DS-1 / DSM 13023 / NCIMB 13966).